Consider the following 190-residue polypeptide: GMP synthase [glutamine-hydrolyzing] subunit A (190 aa).

Positions 2 to 189 constitute a Glutamine amidotransferase type-1 domain; it reads TILVINNKGQ…YEICKKRCNN (188 aa). Catalysis depends on C76, which acts as the Nucleophile. Residues H163 and E165 contribute to the active site.

Heterodimer composed of a glutamine amidotransferase subunit (A) and a GMP-binding subunit (B).

It catalyses the reaction XMP + L-glutamine + ATP + H2O = GMP + L-glutamate + AMP + diphosphate + 2 H(+). The protein operates within purine metabolism; GMP biosynthesis; GMP from XMP (L-Gln route): step 1/1. Functionally, catalyzes the synthesis of GMP from XMP. The polypeptide is GMP synthase [glutamine-hydrolyzing] subunit A (Methanobrevibacter smithii (strain ATCC 35061 / DSM 861 / OCM 144 / PS)).